The chain runs to 292 residues: Transmembrane and ubiquitin-like domain-containing protein 1 (292 aa).

Residues 11–31 (VTLLFGVVFLVLVLVLAWAST) traverse the membrane as a helical segment. The interval 34-143 (VEPPEHLLSP…TQPSAEDAAS (110 aa)) is disordered. Residues 71–80 (VRDEDDKSEP) show a composition bias toward basic and acidic residues. The span at 84 to 94 (AGAAGQSADGS) shows a compositional bias: low complexity. The Ubiquitin-like domain occupies 149 to 222 (MVLRLKFLND…LHCHISQHAT (74 aa)). 2 helical membrane passes run 237-257 (VALN…SVLW) and 269-289 (APAT…AFGV).

The protein resides in the membrane. It is found in the cytoplasm. Its subcellular location is the nucleus. Functionally, may contribute to the regulation of translation during cell-cycle progression. May contribute to the regulation of cell proliferation. The membrane form is involved in sterol-regulated ubiquitination and degradation of HMG-CoA reductase HMGCR. May be involved in centrosome assembly. This chain is Transmembrane and ubiquitin-like domain-containing protein 1 (tmub1), found in Danio rerio (Zebrafish).